The following is a 354-amino-acid chain: Magnesium-protoporphyrin IX monomethyl ester [oxidative] cyclase (354 aa).

Belongs to the AcsF family. Requires Fe cation as cofactor.

The protein localises to the plastid. The protein resides in the chloroplast. It carries out the reaction Mg-protoporphyrin IX 13-monomethyl ester + 3 NADPH + 3 O2 + 2 H(+) = 3,8-divinyl protochlorophyllide a + 3 NADP(+) + 5 H2O. It participates in porphyrin-containing compound metabolism; chlorophyll biosynthesis (light-independent). In terms of biological role, catalyzes the formation of the isocyclic ring in chlorophyll biosynthesis. Mediates the cyclase reaction, which results in the formation of divinylprotochlorophyllide (Pchlide) characteristic of all chlorophylls from magnesium-protoporphyrin IX 13-monomethyl ester (MgPMME). The chain is Magnesium-protoporphyrin IX monomethyl ester [oxidative] cyclase from Cyanidium caldarium (Red alga).